Consider the following 259-residue polypeptide: MVSPDTIRTAIGVVGNGTALVLFLSPVPTFIRIWKKGSVEQYSAVPYVATLLNCMMWVLYGLPAVHPHSMLVITINGTGMAIELTYIALFLAFSLGAVRRRVLLLLAAEVAFVAAVAALVLNLAHTHERRSMIVGILCVLFGTGMYAAPLSVMKMVIQTKSVEYMPLFLSLASLVNGICWTAYALIRFDLYITIPNGLGVMFAVAQLILYAIYYKSTQQIIEARKRKEADHVAMTDVVVDSAKNNPSSGAAAAAANGRY.

Over 1–10 (MVSPDTIRTA) the chain is Extracellular. The MtN3/slv 1 domain maps to 10-94 (AIGVVGNGTA…TYIALFLAFS (85 aa)). A helical membrane pass occupies residues 11–31 (IGVVGNGTALVLFLSPVPTFI). Residues 32–44 (RIWKKGSVEQYSA) are Cytoplasmic-facing. Residues 45–65 (VPYVATLLNCMMWVLYGLPAV) traverse the membrane as a helical segment. Residues 66–77 (HPHSMLVITING) lie on the Extracellular side of the membrane. N-linked (GlcNAc...) asparagine glycosylation is present at Asn76. A helical transmembrane segment spans residues 78–98 (TGMAIELTYIALFLAFSLGAV). Topologically, residues 99 to 101 (RRR) are cytoplasmic. Residues 102 to 122 (VLLLLAAEVAFVAAVAALVLN) form a helical membrane-spanning segment. The Extracellular segment spans residues 123–131 (LAHTHERRS). A helical transmembrane segment spans residues 132-152 (MIVGILCVLFGTGMYAAPLSV). The MtN3/slv 2 domain occupies 133–217 (IVGILCVLFG…ILYAIYYKST (85 aa)). Topologically, residues 153-165 (MKMVIQTKSVEYM) are cytoplasmic. Residues 166–186 (PLFLSLASLVNGICWTAYALI) traverse the membrane as a helical segment. Topologically, residues 187 to 191 (RFDLY) are extracellular. A helical transmembrane segment spans residues 192-212 (ITIPNGLGVMFAVAQLILYAI). The Cytoplasmic segment spans residues 213–259 (YYKSTQQIIEARKRKEADHVAMTDVVVDSAKNNPSSGAAAAAANGRY).

This sequence belongs to the SWEET sugar transporter family. Forms homooligomers and/or heterooligomers.

The protein resides in the cell membrane. Its function is as follows. Mediates both low-affinity uptake and efflux of sugar across the plasma membrane. The sequence is that of Bidirectional sugar transporter SWEET4 (SWEET4) from Oryza sativa subsp. indica (Rice).